Consider the following 394-residue polypeptide: Chalcone synthase (394 aa).

Cysteine 168 is a catalytic residue.

This sequence belongs to the thiolase-like superfamily. Chalcone/stilbene synthases family.

The enzyme catalyses (E)-4-coumaroyl-CoA + 3 malonyl-CoA + 3 H(+) = 2',4,4',6'-tetrahydroxychalcone + 3 CO2 + 4 CoA. The protein operates within secondary metabolite biosynthesis; flavonoid biosynthesis. Its function is as follows. The primary product of this enzyme is 4,2',4',6'-tetrahydroxychalcone (also termed naringenin-chalcone or chalcone) which can under specific conditions spontaneously isomerize into naringenin. In Raphanus sativus (Radish), this protein is Chalcone synthase (CHS).